Consider the following 23-residue polypeptide: Acidic phospholipase A2 Cvv-E6c (23 aa).

Ca(2+) serves as cofactor. In terms of processing, contains 7 disulfide bonds. As to expression, expressed by the venom gland.

Its subcellular location is the secreted. The enzyme catalyses a 1,2-diacyl-sn-glycero-3-phosphocholine + H2O = a 1-acyl-sn-glycero-3-phosphocholine + a fatty acid + H(+). Snake venom phospholipase A2 (PLA2) that significantly inhibits ADP-induced platelet aggregation in platelet-rich plasma of human, rabbit and guinea pig. PLA2 catalyzes the calcium-dependent hydrolysis of the 2-acyl groups in 3-sn-phosphoglycerides. The polypeptide is Acidic phospholipase A2 Cvv-E6c (Crotalus viridis viridis (Prairie rattlesnake)).